The chain runs to 498 residues: Galactose-1-phosphate uridylyltransferase (498 aa).

Belongs to the galactose-1-phosphate uridylyltransferase type 2 family.

The protein localises to the cytoplasm. It catalyses the reaction alpha-D-galactose 1-phosphate + UDP-alpha-D-glucose = alpha-D-glucose 1-phosphate + UDP-alpha-D-galactose. Its pathway is carbohydrate metabolism; galactose metabolism. This chain is Galactose-1-phosphate uridylyltransferase, found in Clostridium perfringens (strain SM101 / Type A).